Reading from the N-terminus, the 60-residue chain is Large ribosomal subunit protein bL32 (60 aa).

This sequence belongs to the bacterial ribosomal protein bL32 family.

This is Large ribosomal subunit protein bL32 from Oenococcus oeni (strain ATCC BAA-331 / PSU-1).